The sequence spans 193 residues: Large ribosomal subunit protein eL18 (193 aa).

Residues 158–193 form a disordered region; the sequence is HFGAAGVPGSHAKPFTSNRGKERQRSSARRRAFRHK. Residues 183 to 193 are compositionally biased toward basic residues; the sequence is SSARRRAFRHK.

It belongs to the eukaryotic ribosomal protein eL18 family.

Its subcellular location is the cytoplasm. This is Large ribosomal subunit protein eL18 (RPL18) from Trypanosoma cruzi (strain CL Brener).